A 274-amino-acid chain; its full sequence is Rhamnulose-1-phosphate aldolase (274 aa).

The active site involves E117. 3 residues coordinate Zn(2+): H141, H143, and H212.

It belongs to the aldolase class II family. RhaD subfamily. Homotetramer. Zn(2+) serves as cofactor.

It localises to the cytoplasm. The catalysed reaction is L-rhamnulose 1-phosphate = (S)-lactaldehyde + dihydroxyacetone phosphate. It functions in the pathway carbohydrate degradation; L-rhamnose degradation; glycerone phosphate from L-rhamnose: step 3/3. Functionally, catalyzes the reversible cleavage of L-rhamnulose-1-phosphate to dihydroxyacetone phosphate (DHAP) and L-lactaldehyde. The chain is Rhamnulose-1-phosphate aldolase from Escherichia fergusonii (strain ATCC 35469 / DSM 13698 / CCUG 18766 / IAM 14443 / JCM 21226 / LMG 7866 / NBRC 102419 / NCTC 12128 / CDC 0568-73).